Reading from the N-terminus, the 188-residue chain is NADH-quinone oxidoreductase subunit I 2 (188 aa).

4Fe-4S ferredoxin-type domains lie at 56–88 (HFLKRDEEGEIKCVACELCARICPCDCIEVVPY) and 98–127 (AKFEIDTARCLFCGLCEDACPADAIALGQQ). The [4Fe-4S] cluster site is built by Cys-68, Cys-71, Cys-74, Cys-78, Cys-107, Cys-110, Cys-113, and Cys-117.

This sequence belongs to the complex I 23 kDa subunit family. In terms of assembly, NDH-1 is composed of 14 different subunits. Subunits NuoA, H, J, K, L, M, N constitute the membrane sector of the complex. [4Fe-4S] cluster is required as a cofactor.

It is found in the cell inner membrane. It catalyses the reaction a quinone + NADH + 5 H(+)(in) = a quinol + NAD(+) + 4 H(+)(out). NDH-1 shuttles electrons from NADH, via FMN and iron-sulfur (Fe-S) centers, to quinones in the respiratory chain. The immediate electron acceptor for the enzyme in this species is believed to be ubiquinone. Couples the redox reaction to proton translocation (for every two electrons transferred, four hydrogen ions are translocated across the cytoplasmic membrane), and thus conserves the redox energy in a proton gradient. The polypeptide is NADH-quinone oxidoreductase subunit I 2 (Rhizobium etli (strain ATCC 51251 / DSM 11541 / JCM 21823 / NBRC 15573 / CFN 42)).